The primary structure comprises 293 residues: Shikimate dehydrogenase (NADP(+)) (293 aa).

Shikimate is bound by residues Ser-20–Thr-22 and Thr-72. Lys-76 functions as the Proton acceptor in the catalytic mechanism. Residues Asn-97 and Asp-112 each coordinate shikimate. NADP(+) contacts are provided by residues Gly-136–Ala-140 and Ile-230. Tyr-232 contacts shikimate. Gly-253 contacts NADP(+).

Belongs to the shikimate dehydrogenase family. As to quaternary structure, homodimer.

The catalysed reaction is shikimate + NADP(+) = 3-dehydroshikimate + NADPH + H(+). Its pathway is metabolic intermediate biosynthesis; chorismate biosynthesis; chorismate from D-erythrose 4-phosphate and phosphoenolpyruvate: step 4/7. Its function is as follows. Involved in the biosynthesis of the chorismate, which leads to the biosynthesis of aromatic amino acids. Catalyzes the reversible NADPH linked reduction of 3-dehydroshikimate (DHSA) to yield shikimate (SA). This Arthrobacter sp. (strain FB24) protein is Shikimate dehydrogenase (NADP(+)).